A 242-amino-acid polypeptide reads, in one-letter code: Ribonuclease PH (242 aa).

Residues R86 and 124 to 126 contribute to the phosphate site; that span reads GTR.

The protein belongs to the RNase PH family. In terms of assembly, homohexameric ring arranged as a trimer of dimers.

It catalyses the reaction tRNA(n+1) + phosphate = tRNA(n) + a ribonucleoside 5'-diphosphate. Its function is as follows. Phosphorolytic 3'-5' exoribonuclease that plays an important role in tRNA 3'-end maturation. Removes nucleotide residues following the 3'-CCA terminus of tRNAs; can also add nucleotides to the ends of RNA molecules by using nucleoside diphosphates as substrates, but this may not be physiologically important. Probably plays a role in initiation of 16S rRNA degradation (leading to ribosome degradation) during starvation. In Caulobacter sp. (strain K31), this protein is Ribonuclease PH.